A 342-amino-acid polypeptide reads, in one-letter code: Ribosomal RNA small subunit methyltransferase C (342 aa).

It belongs to the methyltransferase superfamily. RsmC family. Monomer.

Its subcellular location is the cytoplasm. It carries out the reaction guanosine(1207) in 16S rRNA + S-adenosyl-L-methionine = N(2)-methylguanosine(1207) in 16S rRNA + S-adenosyl-L-homocysteine + H(+). Functionally, specifically methylates the guanine in position 1207 of 16S rRNA in the 30S particle. The sequence is that of Ribosomal RNA small subunit methyltransferase C from Aeromonas hydrophila subsp. hydrophila (strain ATCC 7966 / DSM 30187 / BCRC 13018 / CCUG 14551 / JCM 1027 / KCTC 2358 / NCIMB 9240 / NCTC 8049).